Consider the following 92-residue polypeptide: Pyrimidine/purine nucleoside phosphorylase (92 aa).

It belongs to the nucleoside phosphorylase PpnP family.

The catalysed reaction is a purine D-ribonucleoside + phosphate = a purine nucleobase + alpha-D-ribose 1-phosphate. The enzyme catalyses adenosine + phosphate = alpha-D-ribose 1-phosphate + adenine. It carries out the reaction cytidine + phosphate = cytosine + alpha-D-ribose 1-phosphate. It catalyses the reaction guanosine + phosphate = alpha-D-ribose 1-phosphate + guanine. The catalysed reaction is inosine + phosphate = alpha-D-ribose 1-phosphate + hypoxanthine. The enzyme catalyses thymidine + phosphate = 2-deoxy-alpha-D-ribose 1-phosphate + thymine. It carries out the reaction uridine + phosphate = alpha-D-ribose 1-phosphate + uracil. It catalyses the reaction xanthosine + phosphate = alpha-D-ribose 1-phosphate + xanthine. Functionally, catalyzes the phosphorolysis of diverse nucleosides, yielding D-ribose 1-phosphate and the respective free bases. Can use uridine, adenosine, guanosine, cytidine, thymidine, inosine and xanthosine as substrates. Also catalyzes the reverse reactions. The sequence is that of Pyrimidine/purine nucleoside phosphorylase from Rhodopirellula baltica (strain DSM 10527 / NCIMB 13988 / SH1).